The following is a 246-amino-acid chain: MATKQAQKRLTKEYKMMVENPPPFIIARPNEENILEWHYVISGPPDTPYDGGQYHGTLTFPSDYPYKPPAIRMITPNGRFKENTRLCLSMSDYHPDTWNPGWSVATILNGLLSFMTGDESTTGSITTTQQEKKILAKKSMYYNTFNSTRFKLVFPEIVEKNITELQRRKQEEKDMSMFEKKEDPLVKAAREKAIEVKDIVNPEDRIRAEQALKELEKQHNDKPNGSSSMFYIGVALFLFLVGLFMK.

The Cytoplasmic portion of the chain corresponds to 1-224 (MATKQAQKRL…LEKQHNDKPN (224 aa)). A UBC core domain is found at 5–154 (QAQKRLTKEY…FNSTRFKLVF (150 aa)). Catalysis depends on Cys-87, which acts as the Glycyl thioester intermediate. Residues 225–245 (GSSSMFYIGVALFLFLVGLFM) traverse the membrane as a helical segment.

This sequence belongs to the ubiquitin-conjugating enzyme family.

The protein resides in the endoplasmic reticulum membrane. The catalysed reaction is S-ubiquitinyl-[E1 ubiquitin-activating enzyme]-L-cysteine + [E2 ubiquitin-conjugating enzyme]-L-cysteine = [E1 ubiquitin-activating enzyme]-L-cysteine + S-ubiquitinyl-[E2 ubiquitin-conjugating enzyme]-L-cysteine.. The protein operates within protein modification; protein ubiquitination. Its function is as follows. Catalyzes the covalent attachment of ubiquitin to other proteins. Functions in degradation of misfolded or regulated proteins localized in the endoplasmic reticulum (ER) lumen or membrane via the ubiquitin-proteasome system. Cognate E2 conjugating enzyme for the DOA10 ubiquitin ligase complex, which is part of the ERAD-C pathway responsible for the rapid degradation of membrane proteins with misfolded cytoplasmic domains. In Candida glabrata (strain ATCC 2001 / BCRC 20586 / JCM 3761 / NBRC 0622 / NRRL Y-65 / CBS 138) (Yeast), this protein is Ubiquitin-conjugating enzyme E2 6 (UBC6).